The chain runs to 550 residues: Protein UshA (550 aa).

The first 25 residues, 1-25 (MKLLQRGVALALLTTFTLASETALA), serve as a signal peptide directing secretion. Aspartate 41, histidine 43, aspartate 84, asparagine 116, histidine 217, histidine 252, and glutamine 254 together coordinate Zn(2+). A disulfide bridge links cysteine 258 with cysteine 275. Residues 375–379 (RDKVR) and 498–504 (FNATGGD) contribute to the substrate site.

The protein belongs to the 5'-nucleotidase family. Monomer. Requires Zn(2+) as cofactor.

The protein localises to the periplasm. The catalysed reaction is UDP-sugar + H2O = UMP + alpha-D-aldose 1-phosphate.. It catalyses the reaction a ribonucleoside 5'-phosphate + H2O = a ribonucleoside + phosphate. With respect to regulation, the activity of this protein is inhibited by an intracellular protein inhibitor. Functionally, degradation of external UDP-glucose to uridine monophosphate and glucose-1-phosphate, which can then be used by the cell. The chain is Protein UshA (ushA) from Escherichia coli (strain K12).